The primary structure comprises 583 residues: Immunity-related GTPase family Q protein (583 aa).

Residues Cys-152 and Cys-158 are joined by a disulfide bond. The stretch at 155 to 179 (SDRCEELERLQVVLRTQAEALQRLL) forms a coiled coil. The short motif at 186 to 189 (FEVL) is the LIR 1 element. Thr-203 carries the post-translational modification Phosphothreonine. Positions 223–409 (ARLDLAVAGT…PGLGTWLQHA (187 aa)) constitute an IRG-type G domain. The segment at 322–373 (APLVGVRTDGQGEDPPEVLEEEKAQNASDGNSGDARSEGKKAGIGDSGCTAA) is disordered. Positions 332 to 341 (QGEDPPEVLE) are enriched in acidic residues. The LIR 2 motif lies at 381-384 (WEVL).

Belongs to the TRAFAC class dynamin-like GTPase superfamily. IRG family. In terms of assembly, interacts (via LIR motif 1) with GABARAPL2. Interacts (via LIR motif 2) with MAP1LC3B/LC3B.

It is found in the lysosome. It localises to the cytoplasmic vesicle. The protein resides in the autophagosome. Functionally, autophagy receptor that specifically promotes clearance of misfolded MHC class I molecules by targeting them to the lysosome for degradation. Acts as a molecular adapter that specifically recognizes and binds (1) misfolded MHC class I molecules following their ubiquitination, as well as (2) autophagy-related proteins, promoting the recruitment of misfolded MHC class I molecules to autophagy machinery for degradation. Degradation of misfolded MHC class I molecules is essential to prevent accumulation of defective MHC class I complexes at the surface of CD8(+) T-cells and prevent a stronger T-cell-mediated response. In contrast to other members of the family, does not show GTPase activity. In Mus musculus (Mouse), this protein is Immunity-related GTPase family Q protein (Irgq).